The chain runs to 345 residues: Histone H3-like centromeric protein cpar-1 (345 aa).

The disordered stretch occupies residues 117-246 (NHSNRKPLEE…SRVTKTHNRK (130 aa)). Basic and acidic residues predominate over residues 122–149 (KPLEESRRREEPRDRVHESNIDITHRGD). Over residues 233–246 (RSGKSRVTKTHNRK) the composition is skewed to basic residues. The tract at residues 263–340 (STDMLIQKAP…TDIQLYRRLC (78 aa)) is H3-like.

Belongs to the histone H3 family. In terms of assembly, forms a nucleosome-like histone octamer containing two molecules each of H2A, H2B, cpar-1 and H4 assembled in one cpar-1-H4 heterotetramer and two H2A-H2B heterodimers. In terms of processing, cleaved at the onset of meiotic anaphase I, likely by separase sep-1.

Its subcellular location is the nucleus. It is found in the chromosome. Histone H3-like variant which exclusively replaces conventional H3 in the nucleosome core of centromeric chromatin at the inner plate of the kinetochore. Required for recruitment and assembly of kinetochore proteins, mitotic progression and chromosome segregation. May serve as an epigenetic mark that propagates centromere identity through replication and cell division. Not required for chromosome segregation during meiosis. The polypeptide is Histone H3-like centromeric protein cpar-1 (Caenorhabditis briggsae).